The sequence spans 383 residues: MSSKLTVNAHYSPLKDEDPLDHIDSQTALDSMETDSTGKSSLYFSKSDDPLSKDIEDGISTRKLEEMSVLEANAKEPDSENAPVSRLTIFFAVSSQIVFAILVTILNKQALNIINAPLLMLSFQMAFTSLMVKMYWRFSSVHFQTLRLASAIQLKKFIFVKILGIVSKTYCLAFVPVSFYQISRGLLLPFTILLSFVLLKQKTRLFPFGGCLLVMLGFGFGVRFESHVAPIGIILGVWSSFTTAIESVAVKHYVHEYPTLDLIYIFSALMSVFCLLLSVASLELLHTVQEVVGMQAIKFFIVLILSSLSNFYLNIATFTQIKVTSPVTYMISVSARSILQTLLAVAFLGETLYGNRIYGVILILVGTLLYTLAKEHERRVASA.

The interval 1 to 55 (MSSKLTVNAHYSPLKDEDPLDHIDSQTALDSMETDSTGKSSLYFSKSDDPLSKDI) is disordered. Over residues 13–24 (PLKDEDPLDHID) the composition is skewed to basic and acidic residues. A compositionally biased stretch (polar residues) spans 25-44 (SQTALDSMETDSTGKSSLYF). Residues 46-55 (KSDDPLSKDI) show a composition bias toward basic and acidic residues. The next 10 membrane-spanning stretches (helical) occupy residues 87–107 (LTIF…TILN), 112–132 (NIIN…SLMV), 157–177 (FIFV…FVPV), 179–199 (FYQI…FVLL), 205–225 (LFPF…VRFE), 228–248 (VAPI…IESV), 262–282 (LIYI…VASL), 299–319 (FFIV…ATFT), 329–349 (YMIS…AFLG), and 352–372 (LYGN…LYTL).

The protein belongs to the TPT transporter family.

The protein resides in the membrane. This is an uncharacterized protein from Schizosaccharomyces pombe (strain 972 / ATCC 24843) (Fission yeast).